Reading from the N-terminus, the 331-residue chain is F-box protein At2g26160 (331 aa).

Residues 4–52 enclose the F-box domain; sequence PEWSELPGDLINLTANRFSSISDVLRVRSICKPWRSAAATPKSFQCNLP.

This Arabidopsis thaliana (Mouse-ear cress) protein is F-box protein At2g26160.